Here is a 63-residue protein sequence, read N- to C-terminus: Prokaryotic ubiquitin-like protein Pup (63 aa).

A disordered region spans residues 1-35 (MSGQQSQINAGGGNGQGGDTPEFDAGQVSINSAGT). Residues 19–57 (DTPEFDAGQVSINSAGTDDLLDEIDGLLESNAEEFVRSY) form an ARC ATPase binding region. Glu-63 participates in a covalent cross-link: Isoglutamyl lysine isopeptide (Glu-Lys) (interchain with K-? in acceptor proteins).

This sequence belongs to the prokaryotic ubiquitin-like protein family. As to quaternary structure, strongly interacts with the proteasome-associated ATPase ARC through a hydrophobic interface; the interacting region of Pup lies in its C-terminal half. There is one Pup binding site per ARC hexamer ring.

Its pathway is protein degradation; proteasomal Pup-dependent pathway. Its function is as follows. Protein modifier that is covalently attached to lysine residues of substrate proteins, thereby targeting them for proteasomal degradation. The tagging system is termed pupylation. This Corynebacterium aurimucosum (strain ATCC 700975 / DSM 44827 / CIP 107346 / CN-1) (Corynebacterium nigricans) protein is Prokaryotic ubiquitin-like protein Pup.